A 406-amino-acid polypeptide reads, in one-letter code: Diaminopimelate decarboxylase (406 aa).

At K52 the chain carries N6-(pyridoxal phosphate)lysine. Residues G231 and 265–268 (EPGR) each bind pyridoxal 5'-phosphate. Residues R268, R304, and Y308 each coordinate substrate. The active-site Proton donor is C334. E335 and Y362 together coordinate substrate. Y362 serves as a coordination point for pyridoxal 5'-phosphate.

This sequence belongs to the Orn/Lys/Arg decarboxylase class-II family. LysA subfamily. In terms of assembly, homodimer. It depends on pyridoxal 5'-phosphate as a cofactor.

The enzyme catalyses meso-2,6-diaminopimelate + H(+) = L-lysine + CO2. It participates in amino-acid biosynthesis; L-lysine biosynthesis via DAP pathway; L-lysine from DL-2,6-diaminopimelate: step 1/1. Specifically catalyzes the decarboxylation of meso-diaminopimelate (meso-DAP) to L-lysine. The protein is Diaminopimelate decarboxylase of Neisseria meningitidis serogroup A / serotype 4A (strain DSM 15465 / Z2491).